A 440-amino-acid polypeptide reads, in one-letter code: Adenylosuccinate synthetase 1, chloroplastic (440 aa).

Residues glycine 13–lysine 19 and glycine 41–threonine 43 each bind GTP. Aspartate 14 acts as the Proton acceptor in catalysis. Mg(2+) contacts are provided by aspartate 14 and glycine 41. IMP-binding positions include aspartate 14–lysine 17, asparagine 39–histidine 42, threonine 135, arginine 149, glutamine 230, threonine 245, and arginine 313. The Proton donor role is filled by histidine 42. Threonine 309 to arginine 315 is a substrate binding site. Residues arginine 315 and lysine 341–aspartate 343 contribute to the GTP site.

This sequence belongs to the adenylosuccinate synthetase family. As to quaternary structure, homodimer. Mg(2+) is required as a cofactor.

The protein resides in the plastid. The protein localises to the chloroplast. The catalysed reaction is IMP + L-aspartate + GTP = N(6)-(1,2-dicarboxyethyl)-AMP + GDP + phosphate + 2 H(+). It functions in the pathway purine metabolism; AMP biosynthesis via de novo pathway; AMP from IMP: step 1/2. Functionally, plays an important role in the de novo pathway and in the salvage pathway of purine nucleotide biosynthesis. Catalyzes the first committed step in the biosynthesis of AMP from IMP. This Ricinus communis (Castor bean) protein is Adenylosuccinate synthetase 1, chloroplastic.